An 891-amino-acid chain; its full sequence is 26S proteasome non-ATPase regulatory subunit 2 homolog A (891 aa).

The disordered stretch occupies residues 1-44 (MAPTQDPNSVGGGAKKDEATLKVPSKDPKKKDEKKDEDLSEEDL). Residues 14 to 21 (AKKDEATL) carry the Nuclear localization signal motif. Residues 14 to 37 (AKKDEATLKVPSKDPKKKDEKKDE) are compositionally biased toward basic and acidic residues. Lys-218 participates in a covalent cross-link: Glycyl lysine isopeptide (Lys-Gly) (interchain with G-Cter in ubiquitin). Position 219 is an O-acetylthreonine (Thr-219). PC repeat units follow at residues 414 to 447 (SAAASLGMIQLWDVDSGLSQLDKYFHSNDNPIIA), 448 to 484 (GALLGVGIVNCGIKNDCDPALALLGDYIDKEDSSVRI), 485 to 519 (GAIMGLGISYAGSQNDQIRNKLSPILNDAKAPLDV), 522 to 556 (FASLSLGMIYVGSCNEEVAQSIIFALMDRSEAELG), 565 to 594 (LGLGLLYLGKQESVEATAEVSKTFNEKIRK), 674 to 705 (LALGLLCISNPKVTVMDTLSRLSHDTDSEVAM), and 724 to 739 (AGMLRNLSSYYYKDMS).

This sequence belongs to the proteasome subunit S2 family. Component of the 19S regulatory particle (RP/PA700) base subcomplex of the 26S proteasome. The 26S proteasome is composed of a core protease (CP), known as the 20S proteasome, capped at one or both ends by the 19S regulatory particle (RP/PA700). The RP/PA700 complex is composed of at least 17 different subunits in two subcomplexes, the base and the lid, which form the portions proximal and distal to the 20S proteolytic core, respectively. Interacts with JMJ27. As to expression, expressed in stems, leaves, buds, flowers, siliques and developing seeds.

Its subcellular location is the nucleus. The protein resides in the cytoplasm. Acts as a regulatory subunit of the 26 proteasome which is involved in the ATP-dependent degradation of ubiquitinated proteins. Required during embryogenesis. Required for optimal plant growth and stress responses. Required for innate immunity. Prevents JMJ27 accumulation in non-drought conditions. The protein is 26S proteasome non-ATPase regulatory subunit 2 homolog A of Arabidopsis thaliana (Mouse-ear cress).